A 395-amino-acid polypeptide reads, in one-letter code: L-lactate dehydrogenase (395 aa).

One can recognise an FMN hydroxy acid dehydrogenase domain in the interval 1–380 (MIISAASDYR…SKDSLVQELS (380 aa)). Residue Tyr-24 coordinates substrate. 2 residues coordinate FMN: Ser-106 and Gln-127. Residue Tyr-129 coordinates substrate. Residue Thr-155 coordinates FMN. Substrate is bound at residue Arg-164. Position 251 (Lys-251) interacts with FMN. His-275 acts as the Proton acceptor in catalysis. Arg-278 is a substrate binding site. 306–330 (DSGIRNGLDVVRMIALGADSVLLGR) serves as a coordination point for FMN.

Belongs to the FMN-dependent alpha-hydroxy acid dehydrogenase family. It depends on FMN as a cofactor.

It is found in the cell inner membrane. It carries out the reaction (S)-lactate + A = pyruvate + AH2. Catalyzes the conversion of L-lactate to pyruvate. Is coupled to the respiratory chain. The chain is L-lactate dehydrogenase from Enterobacter sp. (strain 638).